The sequence spans 117 residues: Large ribosomal subunit protein uL18 (117 aa).

The protein belongs to the universal ribosomal protein uL18 family. As to quaternary structure, part of the 50S ribosomal subunit; part of the 5S rRNA/L5/L18/L25 subcomplex. Contacts the 5S and 23S rRNAs.

In terms of biological role, this is one of the proteins that bind and probably mediate the attachment of the 5S RNA into the large ribosomal subunit, where it forms part of the central protuberance. The protein is Large ribosomal subunit protein uL18 of Thioalkalivibrio sulfidiphilus (strain HL-EbGR7).